A 464-amino-acid polypeptide reads, in one-letter code: Tyrosine--tRNA ligase, mitochondrial (464 aa).

Y61 is an L-tyrosine binding site. Residue D65 coordinates ATP. A 'HIGH' region motif is present at residues 66–75 (PTADSLHVGN). The L-tyrosine site is built by D105, Y209, Q213, D216, and Q235. Positions 270–274 (KFGKS) match the 'KMSKS' region motif. K273 is an ATP binding site.

Belongs to the class-I aminoacyl-tRNA synthetase family. In terms of assembly, homodimer.

Its subcellular location is the mitochondrion matrix. The enzyme catalyses tRNA(Tyr) + L-tyrosine + ATP = L-tyrosyl-tRNA(Tyr) + AMP + diphosphate + H(+). Its function is as follows. Catalyzes the attachment of tyrosine to tRNA(Tyr) in a two-step reaction: tyrosine is first activated by ATP to form Tyr-AMP and then transferred to the acceptor end of tRNA(Tyr). This chain is Tyrosine--tRNA ligase, mitochondrial, found in Drosophila melanogaster (Fruit fly).